Here is a 151-residue protein sequence, read N- to C-terminus: Deoxyuridine 5'-triphosphate nucleotidohydrolase (151 aa).

Substrate-binding positions include 70-72, N83, 87-89, and M97; these read RSG and LID.

This sequence belongs to the dUTPase family. It depends on Mg(2+) as a cofactor.

The enzyme catalyses dUTP + H2O = dUMP + diphosphate + H(+). Its pathway is pyrimidine metabolism; dUMP biosynthesis; dUMP from dCTP (dUTP route): step 2/2. In terms of biological role, this enzyme is involved in nucleotide metabolism: it produces dUMP, the immediate precursor of thymidine nucleotides and it decreases the intracellular concentration of dUTP so that uracil cannot be incorporated into DNA. The polypeptide is Deoxyuridine 5'-triphosphate nucleotidohydrolase (Pseudomonas entomophila (strain L48)).